The sequence spans 328 residues: uncharacterized protein (328 aa).

A disordered region spans residues methionine 1–arginine 22. Over residues arginine 9–serine 21 the composition is skewed to polar residues. The next 6 helical transmembrane spans lie at phenylalanine 66–leucine 86, threonine 126–leucine 146, phenylalanine 176–alanine 196, leucine 221–valine 241, glycine 255–proline 275, and isoleucine 290–isoleucine 310.

This sequence to E.coli YhjD.

Its subcellular location is the cell inner membrane. This is an uncharacterized protein from Dickeya dadantii (strain 3937) (Erwinia chrysanthemi (strain 3937)).